We begin with the raw amino-acid sequence, 323 residues long: Vertebrate ancient opsin (323 aa).

Residues 1–38 (MDTLRIAVNGVSYNEASEIYKPHADPFTGPITNLAPWN) lie on the Extracellular side of the membrane. Residues 39–63 (FAVLATLMFVITSLSLFENFTVMLA) form a helical membrane-spanning segment. The Cytoplasmic segment spans residues 64–75 (TYKFKQLRQPLN). A helical membrane pass occupies residues 76–100 (YIIVNLSLADFLVSLTGGTISFLTN). Over 101-115 (ARGYFFLGNWACVLE) the chain is Extracellular. Cys-112 and Cys-189 form a disulfide bridge. The chain crosses the membrane as a helical span at residues 116 to 135 (GFAVTYFGIVAMWSLAVLSF). The Cytoplasmic segment spans residues 136-154 (ERYFVICRPLGNVRLRGKH). The helical transmembrane segment at 155–178 (AALGLLFVWTFSFIWTIPPVFGWC) threads the bilayer. Residues 179 to 202 (SYTVSKIGTTCEPNWYSNNIWNHT) lie on the Extracellular side of the membrane. An N-linked (GlcNAc...) asparagine glycan is attached at Asn-200. Residues 203-230 (YIITFFVTCFIMPLGMIIYCYGKLLQKL) traverse the membrane as a helical segment. Residues 231–250 (RKVSHDRLGNAKKPERQVSR) are Cytoplasmic-facing. The chain crosses the membrane as a helical span at residues 251–274 (MVVVMIVAYLVGWTPYAAFSIIVT). The Extracellular segment spans residues 275-282 (ACPTIYLD). A helical transmembrane segment spans residues 283-307 (PRLAAAPAFFSKTAAVYNPVIYVFM). The residue at position 294 (Lys-294) is an N6-(retinylidene)lysine. The Cytoplasmic portion of the chain corresponds to 308 to 323 (NKQVSTQLNWGFWSRA).

The protein belongs to the G-protein coupled receptor 1 family. Opsin subfamily. In terms of processing, phosphorylated on some or all of the serine and threonine residues present in the C-terminal region.

The protein resides in the membrane. This chain is Vertebrate ancient opsin, found in Salmo salar (Atlantic salmon).